Reading from the N-terminus, the 471-residue chain is Putative multidrug resistance protein MdtD (471 aa).

Over 1-11 (MTDLPDSTRWQ) the chain is Periplasmic. The chain crosses the membrane as a helical span at residues 12–32 (LWIVAFGFFMQSLDTTIVNTA). Over 33-48 (LPSMAQSLGESPLHMH) the chain is Cytoplasmic. Residues 49-69 (MVIVSYVLTVAVMLPASGWLA) form a helical membrane-spanning segment. Residues 70 to 76 (DKVGVRN) are Periplasmic-facing. Residues 77 to 97 (IFFTAIVLFTLGSLFCALSGT) traverse the membrane as a helical segment. Topologically, residues 98–101 (LNEL) are cytoplasmic. Residues 102–124 (LLARALQGVGGAMMVPVGRLTVM) form a helical membrane-spanning segment. At 125–137 (KIVPREQYMAAMT) the chain is on the periplasmic side. Residues 138 to 158 (FVTLPGQVGPLLGPALGGLLV) traverse the membrane as a helical segment. Over 159–164 (EYASWH) the chain is Cytoplasmic. A helical membrane pass occupies residues 165-185 (WIFLINIPVGIIGAIATLMLM). Topologically, residues 186–196 (PNYTMQTRRFD) are periplasmic. Residues 197 to 217 (LSGFLLLAVGMAVLTLALDGS) traverse the membrane as a helical segment. The Cytoplasmic portion of the chain corresponds to 218 to 224 (KGTGLSP). A helical membrane pass occupies residues 225–245 (LAIAGLVAVGVVALVLYLLHA). At 246–262 (RNNNRALFSLKLFRTRT) the chain is on the periplasmic side. Residues 263–283 (FSLGLAGSFAGRIGSGMLPFM) traverse the membrane as a helical segment. Residues 284–285 (TP) lie on the Cytoplasmic side of the membrane. A helical membrane pass occupies residues 286 to 306 (VFLQIGLGFSPFHAGLMMIPM). Topologically, residues 307–341 (VLGSMGMKRIVVQVVNRFGYRRVLVATTLGLSLVT) are periplasmic. Residues 342–362 (MLFMTTALLGWYYVLPFVLFL) form a helical membrane-spanning segment. At 363 to 395 (QGMVNSTRFSSMNTLTLKDLPDNLASSGNSLLS) the chain is on the cytoplasmic side. A helical membrane pass occupies residues 396–416 (MIMQLSMSIGVTIAGLLLGLF). Over 417 to 430 (GSQHVSVDSGTTQT) the chain is Periplasmic. Residues 431-451 (VFMYTWLSMAFIIALPAFIFA) form a helical membrane-spanning segment. At 452 to 471 (RVPNDTHQNVAISRRKRSAQ) the chain is on the cytoplasmic side.

Belongs to the major facilitator superfamily. TCR/Tet family.

Its subcellular location is the cell inner membrane. The sequence is that of Putative multidrug resistance protein MdtD from Escherichia coli O7:K1 (strain IAI39 / ExPEC).